Reading from the N-terminus, the 434-residue chain is ATP-dependent protease ATPase subunit HslU (434 aa).

ATP is bound by residues V18, 60 to 65 (GVGKTE), D247, E312, and R384.

It belongs to the ClpX chaperone family. HslU subfamily. In terms of assembly, a double ring-shaped homohexamer of HslV is capped on each side by a ring-shaped HslU homohexamer. The assembly of the HslU/HslV complex is dependent on binding of ATP.

The protein resides in the cytoplasm. In terms of biological role, ATPase subunit of a proteasome-like degradation complex; this subunit has chaperone activity. The binding of ATP and its subsequent hydrolysis by HslU are essential for unfolding of protein substrates subsequently hydrolyzed by HslV. HslU recognizes the N-terminal part of its protein substrates and unfolds these before they are guided to HslV for hydrolysis. This Bradyrhizobium sp. (strain BTAi1 / ATCC BAA-1182) protein is ATP-dependent protease ATPase subunit HslU.